The chain runs to 404 residues: Tripartite motif-containing 13 (404 aa).

The RING-type zinc finger occupies 10–56 (CPICCCLFEDPRVLPCSHSFCKKCLEGILDGNRSPTWRPPFKCPTCR). The B box-type zinc-finger motif lies at 87 to 129 (PRMSQCRVHSGQPLNIFCATDLKLICGFCATTGDHKGHKFCAL). Zn(2+)-binding residues include Cys-92, His-95, Cys-115, and His-121. The chain crosses the membrane as a helical span at residues 102–119 (IFCATDLKLICGFCATTG). A coiled-coil region spans residues 186 to 236 (KLLRTLEHKRSEILSDLETLKLAVMQTFDPEINRLRSALEEQRRALNIAES).

The protein resides in the endoplasmic reticulum membrane. The protein operates within protein modification; protein ubiquitination. In terms of biological role, E3 ubiquitin ligase involved in the retrotranslocation and turnover of membrane and secretory proteins from the ER through a set of processes named ER-associated degradation (ERAD). This process acts on misfolded proteins as well as in the regulated degradation of correctly folded proteins. This chain is Tripartite motif-containing 13 (trim13), found in Danio rerio (Zebrafish).